The following is a 338-amino-acid chain: Phosphatidate cytidylyltransferase, mitochondrial (338 aa).

It belongs to the TAM41 family. Mg(2+) serves as cofactor.

The protein resides in the mitochondrion inner membrane. The enzyme catalyses a 1,2-diacyl-sn-glycero-3-phosphate + CTP + H(+) = a CDP-1,2-diacyl-sn-glycerol + diphosphate. It participates in phospholipid metabolism; CDP-diacylglycerol biosynthesis; CDP-diacylglycerol from sn-glycerol 3-phosphate: step 3/3. Its function is as follows. Catalyzes the conversion of phosphatidic acid (PA) to CDP-diacylglycerol (CDP-DAG), an essential intermediate in the synthesis of phosphatidylglycerol, cardiolipin and phosphatidylinositol. The chain is Phosphatidate cytidylyltransferase, mitochondrial (tamm41) from Xenopus laevis (African clawed frog).